The following is a 30-amino-acid chain: Bacteriocin curvaticin (30 aa).

A disulfide bridge connects residues Cys-9 and Cys-14.

The protein localises to the secreted. In terms of biological role, has antibacterial activity against the Gram-positive bacterium L.monocytogenes. This Latilactobacillus curvatus (Lactobacillus curvatus) protein is Bacteriocin curvaticin.